A 330-amino-acid polypeptide reads, in one-letter code: Phenylalanine--tRNA ligase alpha subunit (330 aa).

E255 provides a ligand contact to Mg(2+).

This sequence belongs to the class-II aminoacyl-tRNA synthetase family. Phe-tRNA synthetase alpha subunit type 1 subfamily. As to quaternary structure, tetramer of two alpha and two beta subunits. Requires Mg(2+) as cofactor.

Its subcellular location is the cytoplasm. It carries out the reaction tRNA(Phe) + L-phenylalanine + ATP = L-phenylalanyl-tRNA(Phe) + AMP + diphosphate + H(+). The protein is Phenylalanine--tRNA ligase alpha subunit of Acinetobacter baylyi (strain ATCC 33305 / BD413 / ADP1).